We begin with the raw amino-acid sequence, 1410 residues long: DNA-directed RNA polymerase subunit beta' (1410 aa).

Zn(2+) contacts are provided by cysteine 70, cysteine 72, cysteine 85, and cysteine 88. Residues aspartate 460, aspartate 462, and aspartate 464 each coordinate Mg(2+). Zn(2+) contacts are provided by cysteine 814, cysteine 888, cysteine 895, and cysteine 898.

Belongs to the RNA polymerase beta' chain family. In terms of assembly, the RNAP catalytic core consists of 2 alpha, 1 beta, 1 beta' and 1 omega subunit. When a sigma factor is associated with the core the holoenzyme is formed, which can initiate transcription. Requires Mg(2+) as cofactor. It depends on Zn(2+) as a cofactor.

It carries out the reaction RNA(n) + a ribonucleoside 5'-triphosphate = RNA(n+1) + diphosphate. DNA-dependent RNA polymerase catalyzes the transcription of DNA into RNA using the four ribonucleoside triphosphates as substrates. The chain is DNA-directed RNA polymerase subunit beta' from Saccharophagus degradans (strain 2-40 / ATCC 43961 / DSM 17024).